The following is a 387-amino-acid chain: Anhydro-N-acetylmuramic acid kinase (387 aa).

Residue 17-24 coordinates ATP; sequence GTSMDGVD.

It belongs to the anhydro-N-acetylmuramic acid kinase family.

The enzyme catalyses 1,6-anhydro-N-acetyl-beta-muramate + ATP + H2O = N-acetyl-D-muramate 6-phosphate + ADP + H(+). It functions in the pathway amino-sugar metabolism; 1,6-anhydro-N-acetylmuramate degradation. It participates in cell wall biogenesis; peptidoglycan recycling. In terms of biological role, catalyzes the specific phosphorylation of 1,6-anhydro-N-acetylmuramic acid (anhMurNAc) with the simultaneous cleavage of the 1,6-anhydro ring, generating MurNAc-6-P. Is required for the utilization of anhMurNAc either imported from the medium or derived from its own cell wall murein, and thus plays a role in cell wall recycling. The chain is Anhydro-N-acetylmuramic acid kinase from Burkholderia pseudomallei (strain 1710b).